The chain runs to 267 residues: Cell division protein FtsQ (267 aa).

Residues 1–32 lie on the Cytoplasmic side of the membrane; it reads MRKKTSSNKKNTAKKNNNISLHRKLGLIYKKT. The helical transmembrane segment at 33 to 53 threads the bilayer; it reads ILILKIVLIIFICLFAFTKYF. Over 54–267 the chain is Periplasmic; it reads ASLKSYLKTN…DKNKYYIEKY (214 aa). One can recognise a POTRA domain in the interval 73-141; it reads FKLENVIIEG…STIYIKLFER (69 aa).

It belongs to the FtsQ/DivIB family. FtsQ subfamily.

It localises to the cell inner membrane. Essential cell division protein. This is Cell division protein FtsQ from Rickettsia bellii (strain RML369-C).